The primary structure comprises 328 residues: Protein-glutamine deamidase Cif (328 aa).

Residues 1–68 form a disordered region; sequence MLEHGVMKIP…TNRTGENPMI (68 aa). Residues 52–63 show a composition bias toward polar residues; sequence RSSSISNTNRTG. Active-site residues include Cys156, His211, and Gln231.

This sequence belongs to the Cif family.

It is found in the secreted. It localises to the host nucleus. It catalyses the reaction L-glutaminyl-[protein] + H2O = L-glutamyl-[protein] + NH4(+). Its function is as follows. Protein-glutamine deamidase effector that inhibits the host cell cycle and other key cellular processes such as the actin network and programmed-cell death. Acts by mediating the side chain deamidation of 'Gln-40' of host NEDD8, converting it to glutamate, thereby abolishing the activity of cullin-RING-based E3 ubiquitin-protein ligase complexes (CRL complexes). Inactivation of CRL complexes prevents ubiquitination and subsequent degradation of the cyclin-dependent kinase inhibitors CDKN1A/p21 and CDKN1B/p27, leading to G1 and G2 cell cycle arrests in host cells. Deamidation of 'Gln-40' of host NEDD8 also triggers macrophage-specific programmed cell death. Also able to catalyze deamidation of 'Gln-40' of host ubiquitin in vitro; however, NEDD8 constitutes the preferred substrate in vivo. Also regulates the host NF-kappa-B signaling via activation of MAPK/ERK cascade: activation of host MAPK/ERK cascade is independent of CRL complexes inhibition, suggesting that Cif has other host protein targets than NEDD8. This chain is Protein-glutamine deamidase Cif, found in Burkholderia pseudomallei (strain K96243).